The chain runs to 64 residues: Ferredoxin-like protein in nif region (64 aa).

Residues 2–30 (AFKIIASQCTQCGACEFECPSNAIELKGE) enclose the 4Fe-4S ferredoxin-type domain. Positions 10, 13, 16, 20, 39, 42, 51, and 55 each coordinate [4Fe-4S] cluster.

[4Fe-4S] cluster is required as a cofactor.

In Sinorhizobium fredii (strain NBRC 101917 / NGR234), this protein is Ferredoxin-like protein in nif region (fdxN).